The primary structure comprises 198 residues: Transcription factor BHLH133 (198 aa).

The tract at residues 114–127 (SAESSQSYYAKNRR) is basic motif; degenerate. In terms of domain architecture, bHLH spans 114–163 (SAESSQSYYAKNRRQRINERLRILQELIPNGTKVDISTMLEEAIQYVKFL). The interval 128 to 163 (QRINERLRILQELIPNGTKVDISTMLEEAIQYVKFL) is helix-loop-helix motif.

It belongs to the bHLH protein family.

The protein localises to the nucleus. Its function is as follows. Transcription factor that acts as a regulator of iron homeostasis. May act as negative regulator of iron transportation from root to shoot. Does not seem to be involved in the suppression of the induction of iron deficiency responsive genes. This Oryza sativa subsp. japonica (Rice) protein is Transcription factor BHLH133.